The sequence spans 431 residues: Glutamate--tRNA ligase 2 (431 aa).

The short motif at 6-16 (PSPTGDMHIGN) is the 'HIGH' region element. The 'KMSKS' region motif lies at 235-239 (KMSKR). K238 contacts ATP.

Belongs to the class-I aminoacyl-tRNA synthetase family. Glutamate--tRNA ligase type 1 subfamily. In terms of assembly, monomer.

The protein localises to the cytoplasm. It catalyses the reaction tRNA(Glu) + L-glutamate + ATP = L-glutamyl-tRNA(Glu) + AMP + diphosphate. In terms of biological role, catalyzes the attachment of glutamate to tRNA(Glu) in a two-step reaction: glutamate is first activated by ATP to form Glu-AMP and then transferred to the acceptor end of tRNA(Glu). This is Glutamate--tRNA ligase 2 from Campylobacter jejuni subsp. doylei (strain ATCC BAA-1458 / RM4099 / 269.97).